The following is a 65-amino-acid chain: Toxin Co52 (65 aa).

In terms of domain architecture, LCN-type CS-alpha/beta spans 2–65; the sequence is EDGYLVDKTG…PTWPLPNKTC (64 aa). 4 disulfides stabilise this stretch: Cys-12–Cys-65, Cys-16–Cys-41, Cys-25–Cys-46, and Cys-29–Cys-48.

Expressed by the venom gland.

It localises to the secreted. Its function is as follows. Beta toxins bind voltage-independently at site-4 of sodium channels (Nav) and shift the voltage of activation toward more negative potentials thereby affecting sodium channel activation and promoting spontaneous and repetitive firing. Not toxic to mice, chicks, crickets or woodlice (at 5 ug). This chain is Toxin Co52, found in Centruroides ornatus (Scorpion).